The chain runs to 430 residues: ATP-dependent protease ATPase subunit HslU (430 aa).

ATP contacts are provided by residues Val-18, 60–65 (GVGKTE), Asp-243, Glu-308, and Arg-380.

This sequence belongs to the ClpX chaperone family. HslU subfamily. A double ring-shaped homohexamer of HslV is capped on each side by a ring-shaped HslU homohexamer. The assembly of the HslU/HslV complex is dependent on binding of ATP.

Its subcellular location is the cytoplasm. Functionally, ATPase subunit of a proteasome-like degradation complex; this subunit has chaperone activity. The binding of ATP and its subsequent hydrolysis by HslU are essential for unfolding of protein substrates subsequently hydrolyzed by HslV. HslU recognizes the N-terminal part of its protein substrates and unfolds these before they are guided to HslV for hydrolysis. This is ATP-dependent protease ATPase subunit HslU from Caulobacter vibrioides (strain ATCC 19089 / CIP 103742 / CB 15) (Caulobacter crescentus).